Consider the following 311-residue polypeptide: Acetyl-coenzyme A carboxylase carboxyl transferase subunit beta (311 aa).

The CoA carboxyltransferase N-terminal domain maps to 32 to 299; the sequence is LWVKCPVSEE…TSMPAALTPP (268 aa). The tract at residues 291–311 is disordered; it reads SMPAALTPPAPDHVVADGGSH.

It belongs to the AccD/PCCB family. In terms of assembly, acetyl-CoA carboxylase is a heterohexamer composed of biotin carboxyl carrier protein (AccB), biotin carboxylase (AccC) and two subunits each of ACCase subunit alpha (AccA) and ACCase subunit beta (AccD).

Its subcellular location is the cytoplasm. The enzyme catalyses N(6)-carboxybiotinyl-L-lysyl-[protein] + acetyl-CoA = N(6)-biotinyl-L-lysyl-[protein] + malonyl-CoA. It participates in lipid metabolism; malonyl-CoA biosynthesis; malonyl-CoA from acetyl-CoA: step 1/1. Functionally, component of the acetyl coenzyme A carboxylase (ACC) complex. Biotin carboxylase (BC) catalyzes the carboxylation of biotin on its carrier protein (BCCP) and then the CO(2) group is transferred by the transcarboxylase to acetyl-CoA to form malonyl-CoA. The polypeptide is Acetyl-coenzyme A carboxylase carboxyl transferase subunit beta (Maricaulis maris (strain MCS10) (Caulobacter maris)).